Here is a 502-residue protein sequence, read N- to C-terminus: Maturase K (502 aa).

The protein belongs to the intron maturase 2 family. MatK subfamily.

It localises to the plastid. The protein localises to the chloroplast. Its function is as follows. Usually encoded in the trnK tRNA gene intron. Probably assists in splicing its own and other chloroplast group II introns. The chain is Maturase K from Stanleya pinnata (Prince's plume).